Here is a 523-residue protein sequence, read N- to C-terminus: MTNPQPAIEGGISEVEIISQQVDEETKSIAPVQLVNFAYRDLPLAAVDLSTAGSQLLSNLDEDYQREGSNWLKPCCGKRAAVWQVFLLSASLNSFLVACVILVVILLTLELLIDIKLLQFSSAFQFAGVIHWISLVILSVFFSETVLRIVVLGIWDYIENKIEVFDGAVIILSLAPMVASTVANGPRSPWDAISLIIMLRIWRVKRVIDAYVLPVKLEMEMVIQQYEKAKVIQDEQLERLTQICQEQGFEIRQLRAHLAQQDLDLAAEREAALQAPHVLSQPRSRFKVLEAGTWDEETAAESVVEELQPSQEATMKDDMNSYISQYYNGPSSDSGVPEPAVCMVTTAAIDIHQPNISSDLFSLDMPLKLGGNGTSATSESASRSSVTRAQSDSSQTLGSSMDCSTAREEPSSEPGPSPPPLPSQQQVEEATVQDLLSSLSEDPCPSQKALDPAPLARPSPAGSAQTSPELEHRVSLFNQKNQEGFTVFQIRPVIHFQPTVPMLEDKFRSLESKEQKLHRVPEA.

The Cytoplasmic segment spans residues 1 to 94; that stretch reads MTNPQPAIEG…VFLLSASLNS (94 aa). The chain crosses the membrane as a helical span at residues 95 to 115; the sequence is FLVACVILVVILLTLELLIDI. Over 116–121 the chain is Extracellular; sequence KLLQFS. The helical transmembrane segment at 122–142 threads the bilayer; that stretch reads SAFQFAGVIHWISLVILSVFF. The Cytoplasmic portion of the chain corresponds to 143 to 161; sequence SETVLRIVVLGIWDYIENK. The chain crosses the membrane as a helical span at residues 162–182; it reads IEVFDGAVIILSLAPMVASTV. Residues 183–191 lie on the Extracellular side of the membrane; that stretch reads ANGPRSPWD. Residues 192 to 212 form a helical membrane-spanning segment; the sequence is AISLIIMLRIWRVKRVIDAYV. Residues 213 to 523 lie on the Cytoplasmic side of the membrane; it reads LPVKLEMEMV…EQKLHRVPEA (311 aa). A coiled-coil region spans residues 218–270; sequence EMEMVIQQYEKAKVIQDEQLERLTQICQEQGFEIRQLRAHLAQQDLDLAAERE. The interval 380-477 is disordered; the sequence is SASRSSVTRA…PELEHRVSLF (98 aa). Residues 382-397 show a composition bias toward low complexity; the sequence is SRSSVTRAQSDSSQTL. A compositionally biased stretch (polar residues) spans 398-411; sequence GSSMDCSTAREEPS. Positions 421-430 are enriched in pro residues; sequence LPSQQQVEEA.

In terms of assembly, homodimer; disulfide-linked. In terms of tissue distribution, mainly expressed in the cerebellum. Also expressed in cerebral cortex, skeletal muscle and thyroid, but at much lower levels.

The protein localises to the cell membrane. It is found in the cell projection. The protein resides in the dendrite. It localises to the perikaryon. Voltage-sensor protein present on the post-synaptic side of glutamatergic mossy fibers and granule cells in the cerebellum. Despite the presence of a voltage-sensor segment, does not form a functional ion channel and its precise role remains unclear. Undergoes both rapid and slow structural rearrangements in response to changes in voltage. Contains a zinc-binding site that can regulate the slow conformational transition. This is Transmembrane protein 266 from Homo sapiens (Human).